A 215-amino-acid chain; its full sequence is Imidazole glycerol phosphate synthase subunit HisH (215 aa).

Positions 7–215 constitute a Glutamine amidotransferase type-1 domain; the sequence is TIAVIDYGMG…LLKNFVEWQP (209 aa). The Nucleophile role is filled by Cys-86. Catalysis depends on residues His-195 and Glu-197.

In terms of assembly, heterodimer of HisH and HisF.

It is found in the cytoplasm. It catalyses the reaction 5-[(5-phospho-1-deoxy-D-ribulos-1-ylimino)methylamino]-1-(5-phospho-beta-D-ribosyl)imidazole-4-carboxamide + L-glutamine = D-erythro-1-(imidazol-4-yl)glycerol 3-phosphate + 5-amino-1-(5-phospho-beta-D-ribosyl)imidazole-4-carboxamide + L-glutamate + H(+). The enzyme catalyses L-glutamine + H2O = L-glutamate + NH4(+). It functions in the pathway amino-acid biosynthesis; L-histidine biosynthesis; L-histidine from 5-phospho-alpha-D-ribose 1-diphosphate: step 5/9. In terms of biological role, IGPS catalyzes the conversion of PRFAR and glutamine to IGP, AICAR and glutamate. The HisH subunit catalyzes the hydrolysis of glutamine to glutamate and ammonia as part of the synthesis of IGP and AICAR. The resulting ammonia molecule is channeled to the active site of HisF. The protein is Imidazole glycerol phosphate synthase subunit HisH of Dechloromonas aromatica (strain RCB).